The sequence spans 363 residues: 3-isopropylmalate dehydrogenase (363 aa).

Residue 78-91 (GPKWENLPPESQPE) coordinates NAD(+). Substrate contacts are provided by arginine 99, arginine 109, arginine 138, and aspartate 227. Mg(2+)-binding residues include aspartate 227, aspartate 251, and aspartate 255. 285–297 (GSAPDIAGKNIAN) provides a ligand contact to NAD(+).

It belongs to the isocitrate and isopropylmalate dehydrogenases family. LeuB type 1 subfamily. In terms of assembly, homodimer. Mg(2+) serves as cofactor. Mn(2+) is required as a cofactor.

The protein resides in the cytoplasm. The catalysed reaction is (2R,3S)-3-isopropylmalate + NAD(+) = 4-methyl-2-oxopentanoate + CO2 + NADH. It participates in amino-acid biosynthesis; L-leucine biosynthesis; L-leucine from 3-methyl-2-oxobutanoate: step 3/4. In terms of biological role, catalyzes the oxidation of 3-carboxy-2-hydroxy-4-methylpentanoate (3-isopropylmalate) to 3-carboxy-4-methyl-2-oxopentanoate. The product decarboxylates to 4-methyl-2 oxopentanoate. The polypeptide is 3-isopropylmalate dehydrogenase (Salmonella typhi).